The following is a 361-amino-acid chain: Putative agmatine deiminase (361 aa).

Catalysis depends on C354, which acts as the Amidino-cysteine intermediate.

Belongs to the agmatine deiminase family.

It carries out the reaction agmatine + H2O = N-carbamoylputrescine + NH4(+). The sequence is that of Putative agmatine deiminase from Streptococcus pneumoniae (strain P1031).